Reading from the N-terminus, the 178-residue chain is Large ribosomal subunit protein uL6 (178 aa).

The protein belongs to the universal ribosomal protein uL6 family. Part of the 50S ribosomal subunit.

Functionally, this protein binds to the 23S rRNA, and is important in its secondary structure. It is located near the subunit interface in the base of the L7/L12 stalk, and near the tRNA binding site of the peptidyltransferase center. This Thermoplasma acidophilum (strain ATCC 25905 / DSM 1728 / JCM 9062 / NBRC 15155 / AMRC-C165) protein is Large ribosomal subunit protein uL6.